The chain runs to 439 residues: Lipid-A-disaccharide synthase (439 aa).

The tract at residues 1–35 (MKEIGNRESGIVDGQRNGASVGSDPTALPIPHSPL) is disordered.

Belongs to the LpxB family.

It catalyses the reaction a lipid X + a UDP-2-N,3-O-bis[(3R)-3-hydroxyacyl]-alpha-D-glucosamine = a lipid A disaccharide + UDP + H(+). The protein operates within bacterial outer membrane biogenesis; LPS lipid A biosynthesis. In terms of biological role, condensation of UDP-2,3-diacylglucosamine and 2,3-diacylglucosamine-1-phosphate to form lipid A disaccharide, a precursor of lipid A, a phosphorylated glycolipid that anchors the lipopolysaccharide to the outer membrane of the cell. This is Lipid-A-disaccharide synthase from Xanthomonas euvesicatoria pv. vesicatoria (strain 85-10) (Xanthomonas campestris pv. vesicatoria).